The sequence spans 342 residues: MSAFTPASEVLLRHSDDFEQSRILFAGDLQDDLPARFECAASRAHTQQFHHWQALSRQMGENVRFSLVAQASDVADCDTLIYYWPKNKPEAQFQLMNILSLMPVGVDVFVVGENRSGVRSAEPMLADYAPLNKVDSARRCGLYHGRLEKQPQFSLESWWAEYSIDGLTIKTLPGVFSRDGLDVGSQLLLSTLTPHTKGKVLDVGCGAGVLSAALASHSPKVRLTLCDVSAPAVEASRATLAANGLEGEVFASNVFSEVKGRFDMIISNPPFHDGMQTSLDAAQTLIRGAVRHLNSGGELRIVANAFLPYPKILDETFGFHEVIAQTGRFKVYRTVMTRQAKK.

This sequence belongs to the methyltransferase superfamily. RsmC family. In terms of assembly, monomer.

It is found in the cytoplasm. The enzyme catalyses guanosine(1207) in 16S rRNA + S-adenosyl-L-methionine = N(2)-methylguanosine(1207) in 16S rRNA + S-adenosyl-L-homocysteine + H(+). Its function is as follows. Specifically methylates the guanine in position 1207 of 16S rRNA in the 30S particle. The chain is Ribosomal RNA small subunit methyltransferase C from Salmonella heidelberg (strain SL476).